The sequence spans 213 residues: Probable thiopurine S-methyltransferase (213 aa).

Trp10, Leu45, Glu66, and Arg125 together coordinate S-adenosyl-L-methionine.

It belongs to the class I-like SAM-binding methyltransferase superfamily. TPMT family.

It localises to the cytoplasm. It carries out the reaction S-adenosyl-L-methionine + a thiopurine = S-adenosyl-L-homocysteine + a thiopurine S-methylether.. The chain is Probable thiopurine S-methyltransferase from Yarrowia lipolytica (strain CLIB 122 / E 150) (Yeast).